The primary structure comprises 1094 residues: Probable arabinosyltransferase A (1094 aa).

A run of 13 helical transmembrane segments spans residues 12–34 (IARL…VPLL), 205–224 (AVML…LAAL), 247–269 (GFAS…VIGA), 322–344 (VWMR…RFVL), 356–375 (SNRV…WLPF), 408–430 (AAVA…IALA), 451–470 (GLLA…TVVV), 519–536 (FAVL…FVLL), 543–565 (GLAS…LLTF), 575–597 (GAFA…RIGL), 604–626 (TLYV…GWFY), 641–663 (IASH…LAAW), and 684–706 (ILAS…GSMA).

Belongs to the emb family.

It is found in the cell membrane. Functionally, arabinosyl transferase responsible for the polymerization of arabinose into the arabinan of arabinogalactan. In Mycobacterium tuberculosis (strain CDC 1551 / Oshkosh), this protein is Probable arabinosyltransferase A (embA).